The primary structure comprises 204 residues: Molybdenum cofactor guanylyltransferase (204 aa).

GTP-binding positions include 12–14, lysine 25, asparagine 53, aspartate 71, and aspartate 101; that span reads LAG. Position 101 (aspartate 101) interacts with Mg(2+).

Belongs to the MobA family. As to quaternary structure, monomer. Mg(2+) is required as a cofactor.

The protein resides in the cytoplasm. It catalyses the reaction Mo-molybdopterin + GTP + H(+) = Mo-molybdopterin guanine dinucleotide + diphosphate. Its function is as follows. Transfers a GMP moiety from GTP to Mo-molybdopterin (Mo-MPT) cofactor (Moco or molybdenum cofactor) to form Mo-molybdopterin guanine dinucleotide (Mo-MGD) cofactor. The protein is Molybdenum cofactor guanylyltransferase of Ralstonia nicotianae (strain ATCC BAA-1114 / GMI1000) (Ralstonia solanacearum).